The sequence spans 164 residues: Protein SprT (164 aa).

The SprT-like domain occupies 14–156 (QQAETFFKRP…LCKRCRAILV (143 aa)). A Zn(2+)-binding site is contributed by H69. E70 is an active-site residue. Zn(2+) is bound at residue H73.

This sequence belongs to the SprT family. The cofactor is Zn(2+).

It localises to the cytoplasm. The protein is Protein SprT of Pseudomonas putida (strain GB-1).